A 468-amino-acid chain; its full sequence is MSSGKIAQVVGPVVDVMFASGDKLPEINNALIVYKDSDKKQKIVLEVALELGDGMVRTIAMESTDGLTRGLEVLDTGRAISVPVGKETLGRVFNVLGETIDLEEPFAEDVDRQPIHKKAPSFDELSTSSEILETGIKVIDLLAPYLKGGKVGLFGGAGVGKTVLIQELIHNIAQEHGGISVFTGVGERTREGNDLYWEMKESGVIEKTAMVFGQMNEPPGARMRVALTGLTIAEYFRDVEGQDVLLFIDNIFRFTQAGSEVSALLGRMPSAVGYQPTLATEMGQLQERITSTQKGSVTSIQAIYVPADDYTDPAPATAFAHLDSTTNLERKLTQMGIYPAVDPLASSSRALSPEIVGEEHYAVATEVQRVLQRYRELQDIIAILGMDELSDEEKTLVGRARRIQFFLSQNFNVAEQFTGLPGSYVPVAETVRGFKEILEGKYDDLPEDAFRSVGPIEDVIKKAEKMGF.

Residue 155 to 162 coordinates ATP; sequence GGAGVGKT.

The protein belongs to the ATPase alpha/beta chains family. F-type ATPases have 2 components, CF(1) - the catalytic core - and CF(0) - the membrane proton channel. CF(1) has five subunits: alpha(3), beta(3), gamma(1), delta(1), epsilon(1). CF(0) has three main subunits: a(1), b(2) and c(9-12). The alpha and beta chains form an alternating ring which encloses part of the gamma chain. CF(1) is attached to CF(0) by a central stalk formed by the gamma and epsilon chains, while a peripheral stalk is formed by the delta and b chains.

Its subcellular location is the cell membrane. The enzyme catalyses ATP + H2O + 4 H(+)(in) = ADP + phosphate + 5 H(+)(out). In terms of biological role, produces ATP from ADP in the presence of a proton gradient across the membrane. The catalytic sites are hosted primarily by the beta subunits. This Streptococcus pyogenes serotype M3 (strain ATCC BAA-595 / MGAS315) protein is ATP synthase subunit beta.